Consider the following 199-residue polypeptide: Peroxynitrite isomerase (199 aa).

A GXWXGXG motif is present at residues 20-26; sequence GVWEGSG. 2 residues coordinate heme b: Lys158 and His190.

The protein belongs to the nitrobindin family. Homodimer. Heme b serves as cofactor.

It catalyses the reaction peroxynitrite = nitrate. The protein operates within nitrogen metabolism. Functionally, heme-binding protein able to scavenge peroxynitrite and to protect free L-tyrosine against peroxynitrite-mediated nitration, by acting as a peroxynitrite isomerase that converts peroxynitrite to nitrate. Therefore, this protein likely plays a role in peroxynitrite sensing and in the detoxification of reactive nitrogen and oxygen species (RNS and ROS, respectively). Is able to bind nitric oxide (NO) in vitro, but may act as a sensor of peroxynitrite levels in vivo. This Clavibacter sepedonicus (Clavibacter michiganensis subsp. sepedonicus) protein is Peroxynitrite isomerase.